The following is a 256-amino-acid chain: MNNDVFPNKFKAALAAKQVQIGCWSALSNPISTEVLGLAGFDWLVLDGEHAPNDISTFIPQLMALKGSASAPVVRVPTNEPVIIKRLLDIGFYNFLIPFVETKEEAEQAVASTRYPPEGIRGVSVSHRANMFGTVADYFAQSNKNITILVQIESQQGVDNVDAIAATEGVDGIFVGPSDLAAALGHLGNASHPDVQKAIQHIFNRASAHGKPSGILAPVEADARRYLEWGATFVAVGSDLGIFRSATQKLADTFKK.

His50 (proton acceptor) is an active-site residue. Gln151 lines the substrate pocket. Glu153 lines the Mg(2+) pocket. Residues Ser178 and Asp179 each contribute to the substrate site. Asp179 provides a ligand contact to Mg(2+).

The protein belongs to the HpcH/HpaI aldolase family. KDGluc aldolase subfamily. As to quaternary structure, homohexamer; trimer of dimers. The cofactor is Mg(2+).

It carries out the reaction 5-dehydro-4-deoxy-D-glucarate = 2-hydroxy-3-oxopropanoate + pyruvate. It catalyses the reaction 2-dehydro-3-deoxy-D-glucarate = 2-hydroxy-3-oxopropanoate + pyruvate. The protein operates within carbohydrate acid metabolism; galactarate degradation; D-glycerate from galactarate: step 2/3. Its function is as follows. Catalyzes the reversible retro-aldol cleavage of both 5-keto-4-deoxy-D-glucarate and 2-keto-3-deoxy-D-glucarate to pyruvate and tartronic semialdehyde. This chain is 5-keto-4-deoxy-D-glucarate aldolase, found in Escherichia coli O6:H1 (strain CFT073 / ATCC 700928 / UPEC).